We begin with the raw amino-acid sequence, 274 residues long: tRNA-cytidine(32) 2-sulfurtransferase (274 aa).

The PP-loop motif signature appears at 40-45; it reads SGGKDS. Positions 115, 118, and 206 each coordinate [4Fe-4S] cluster.

This sequence belongs to the TtcA family. Homodimer. Requires Mg(2+) as cofactor. [4Fe-4S] cluster is required as a cofactor.

The protein resides in the cytoplasm. It carries out the reaction cytidine(32) in tRNA + S-sulfanyl-L-cysteinyl-[cysteine desulfurase] + AH2 + ATP = 2-thiocytidine(32) in tRNA + L-cysteinyl-[cysteine desulfurase] + A + AMP + diphosphate + H(+). It participates in tRNA modification. In terms of biological role, catalyzes the ATP-dependent 2-thiolation of cytidine in position 32 of tRNA, to form 2-thiocytidine (s(2)C32). The sulfur atoms are provided by the cysteine/cysteine desulfurase (IscS) system. In Pseudomonas syringae pv. tomato (strain ATCC BAA-871 / DC3000), this protein is tRNA-cytidine(32) 2-sulfurtransferase.